We begin with the raw amino-acid sequence, 516 residues long: Ribose import ATP-binding protein RbsA (516 aa).

2 ABC transporter domains span residues 14-250 (LRLT…VGRA) and 261-504 (AKGA…AGIG). Residue 46–53 (GENGAGKS) coordinates ATP.

It belongs to the ABC transporter superfamily. Ribose importer (TC 3.A.1.2.1) family. In terms of assembly, the complex is composed of an ATP-binding protein (RbsA), two transmembrane proteins (RbsC) and a solute-binding protein (RbsB).

Its subcellular location is the cell inner membrane. The enzyme catalyses D-ribose(out) + ATP + H2O = D-ribose(in) + ADP + phosphate + H(+). Its function is as follows. Part of the ABC transporter complex RbsABC involved in ribose import. Responsible for energy coupling to the transport system. In Jannaschia sp. (strain CCS1), this protein is Ribose import ATP-binding protein RbsA.